A 78-amino-acid polypeptide reads, in one-letter code: Cytochrome c oxidase subunit 6b-2 (78 aa).

The 44-residue stretch at 22–65 folds into the CHCH domain; that stretch reads TRHCFTRYIEFHRCTTAKGEESNDCERFAKYYRALCPGEWVDKW. The short motif at 25–35 is the Cx9C motif element; it reads CFTRYIEFHRC. Disulfide bonds link cysteine 25–cysteine 57 and cysteine 35–cysteine 46. A Cx10C motif motif is present at residues 46 to 57; sequence CERFAKYYRALC.

The protein belongs to the cytochrome c oxidase subunit 6B (TC 3.D.4.8) family. In terms of tissue distribution, specifically expressed in roots.

It is found in the mitochondrion. This protein is one of the nuclear-coded polypeptide chains of cytochrome c oxidase, the terminal oxidase in mitochondrial electron transport. This protein may be one of the heme-binding subunits of the oxidase. The protein is Cytochrome c oxidase subunit 6b-2 (COX6B-2) of Arabidopsis thaliana (Mouse-ear cress).